Here is a 180-residue protein sequence, read N- to C-terminus: Pro-glucagon (180 aa).

The first 20 residues, 1 to 20 (MKSIYFVAGLFVMLVQGSWQ), serve as a signal peptide directing secretion. A disordered region spans residues 26-59 (TEEKSRSFSASQADPLSDPDQMNEDKRHSQGTFT). S54 is modified (phosphoserine). Residues 84–89 (NRNNIA) constitute a propeptide that is removed on maturation. Phosphoserine occurs at positions 105 and 108. R127 bears the Arginine amide mark. A propeptide spanning residues 131 to 145 (DFPEEVAIVEELGRR) is cleaved from the precursor. Residues S150 and S152 each carry the phosphoserine modification.

Belongs to the glucagon family. Proglucagon is post-translationally processed in a tissue-specific manner in pancreatic A cells and intestinal L cells. In pancreatic A cells, the major bioactive hormone is glucagon cleaved by PCSK2/PC2. In the intestinal L cells PCSK1/PC1 liberates GLP-1, GLP-2, glicentin and oxyntomodulin. GLP-1 is further N-terminally truncated by post-translational processing in the intestinal L cells resulting in GLP-1(7-37) GLP-1-(7-36)amide. The C-terminal amidation is neither important for the metabolism of GLP-1 nor for its effects on the endocrine pancreas. As to expression, secreted in the A cells of the islets of Langerhans. In terms of tissue distribution, secreted in the A cells of the islets of Langerhans. Secreted from enteroendocrine L cells throughout the gastrointestinal tract. Also secreted in selected neurons in the brain. Secreted from enteroendocrine cells throughout the gastrointestinal tract. Also secreted in selected neurons in the brain. As to expression, secreted from enteroendocrine cells throughout the gastrointestinal tract.

Its subcellular location is the secreted. Its function is as follows. Plays a key role in glucose metabolism and homeostasis. Regulates blood glucose by increasing gluconeogenesis and decreasing glycolysis. A counterregulatory hormone of insulin, raises plasma glucose levels in response to insulin-induced hypoglycemia. Plays an important role in initiating and maintaining hyperglycemic conditions in diabetes. Potent stimulator of glucose-dependent insulin release. Also stimulates insulin release in response to IL6. Plays important roles on gastric motility and the suppression of plasma glucagon levels. May be involved in the suppression of satiety and stimulation of glucose disposal in peripheral tissues, independent of the actions of insulin. Has growth-promoting activities on intestinal epithelium. May also regulate the hypothalamic pituitary axis (HPA) via effects on LH, TSH, CRH, oxytocin, and vasopressin secretion. Increases islet mass through stimulation of islet neogenesis and pancreatic beta cell proliferation. Inhibits beta cell apoptosis. Functionally, stimulates intestinal growth and up-regulates villus height in the small intestine, concomitant with increased crypt cell proliferation and decreased enterocyte apoptosis. The gastrointestinal tract, from the stomach to the colon is the principal target for GLP-2 action. Plays a key role in nutrient homeostasis, enhancing nutrient assimilation through enhanced gastrointestinal function, as well as increasing nutrient disposal. Stimulates intestinal glucose transport and decreases mucosal permeability. In terms of biological role, significantly reduces food intake. Inhibits gastric emptying in humans. Suppression of gastric emptying may lead to increased gastric distension, which may contribute to satiety by causing a sensation of fullness. Its function is as follows. May modulate gastric acid secretion and the gastro-pyloro-duodenal activity. May play an important role in intestinal mucosal growth in the early period of life. This is Pro-glucagon from Homo sapiens (Human).